Consider the following 273-residue polypeptide: Dermonecrotic toxin LsaSicTox-alphaIB1avi (273 aa).

Histidine 5 is an active-site residue. Mg(2+)-binding residues include glutamate 25 and aspartate 27. Histidine 41 (nucleophile) is an active-site residue. Cystine bridges form between cysteine 45/cysteine 51 and cysteine 47/cysteine 190. Aspartate 85 contributes to the Mg(2+) binding site.

The protein belongs to the arthropod phospholipase D family. Class II subfamily. The cofactor is Mg(2+). As to expression, expressed by the venom gland.

Its subcellular location is the secreted. It carries out the reaction an N-(acyl)-sphingosylphosphocholine = an N-(acyl)-sphingosyl-1,3-cyclic phosphate + choline. It catalyses the reaction an N-(acyl)-sphingosylphosphoethanolamine = an N-(acyl)-sphingosyl-1,3-cyclic phosphate + ethanolamine. The enzyme catalyses a 1-acyl-sn-glycero-3-phosphocholine = a 1-acyl-sn-glycero-2,3-cyclic phosphate + choline. The catalysed reaction is a 1-acyl-sn-glycero-3-phosphoethanolamine = a 1-acyl-sn-glycero-2,3-cyclic phosphate + ethanolamine. In terms of biological role, dermonecrotic toxins cleave the phosphodiester linkage between the phosphate and headgroup of certain phospholipids (sphingolipid and lysolipid substrates), forming an alcohol (often choline) and a cyclic phosphate. This toxin acts on sphingomyelin (SM). It may also act on ceramide phosphoethanolamine (CPE), lysophosphatidylcholine (LPC) and lysophosphatidylethanolamine (LPE), but not on lysophosphatidylserine (LPS), and lysophosphatidylglycerol (LPG). It acts by transphosphatidylation, releasing exclusively cyclic phosphate products as second products. Induces dermonecrosis, hemolysis, increased vascular permeability, edema, inflammatory response, and platelet aggregation. This Loxosceles sabina (Tucson recluse spider) protein is Dermonecrotic toxin LsaSicTox-alphaIB1avi.